Here is a 358-residue protein sequence, read N- to C-terminus: Phenylalanine--tRNA ligase alpha subunit (358 aa).

Mg(2+) is bound at residue E279.

This sequence belongs to the class-II aminoacyl-tRNA synthetase family. Phe-tRNA synthetase alpha subunit type 1 subfamily. Tetramer of two alpha and two beta subunits. Mg(2+) is required as a cofactor.

Its subcellular location is the cytoplasm. The enzyme catalyses tRNA(Phe) + L-phenylalanine + ATP = L-phenylalanyl-tRNA(Phe) + AMP + diphosphate + H(+). The polypeptide is Phenylalanine--tRNA ligase alpha subunit (Variovorax paradoxus (strain S110)).